Reading from the N-terminus, the 179-residue chain is ATP synthase subunit delta (179 aa).

The protein belongs to the ATPase delta chain family. F-type ATPases have 2 components, F(1) - the catalytic core - and F(0) - the membrane proton channel. F(1) has five subunits: alpha(3), beta(3), gamma(1), delta(1), epsilon(1). F(0) has three main subunits: a(1), b(2) and c(10-14). The alpha and beta chains form an alternating ring which encloses part of the gamma chain. F(1) is attached to F(0) by a central stalk formed by the gamma and epsilon chains, while a peripheral stalk is formed by the delta and b chains.

It is found in the cell inner membrane. Functionally, f(1)F(0) ATP synthase produces ATP from ADP in the presence of a proton or sodium gradient. F-type ATPases consist of two structural domains, F(1) containing the extramembraneous catalytic core and F(0) containing the membrane proton channel, linked together by a central stalk and a peripheral stalk. During catalysis, ATP synthesis in the catalytic domain of F(1) is coupled via a rotary mechanism of the central stalk subunits to proton translocation. In terms of biological role, this protein is part of the stalk that links CF(0) to CF(1). It either transmits conformational changes from CF(0) to CF(1) or is implicated in proton conduction. The polypeptide is ATP synthase subunit delta (Burkholderia ambifaria (strain ATCC BAA-244 / DSM 16087 / CCUG 44356 / LMG 19182 / AMMD) (Burkholderia cepacia (strain AMMD))).